A 238-amino-acid chain; its full sequence is Transcription factor MYB27 (238 aa).

HTH myb-type domains lie at 6 to 58 and 59 to 113; these read EETL…MNYL and NPTL…RKKQ. Residues 31–38 carry the Nuclear localization signal motif; it reads ERRWDSLA. DNA-binding regions (H-T-H motif) lie at residues 34–58 and 86–109; these read WDSLAIVSGLKRSGKSCRLRWMNYL and WSKIARRLPGRTDNEIKNYWRTHY.

Its subcellular location is the nucleus. The polypeptide is Transcription factor MYB27 (Arabidopsis thaliana (Mouse-ear cress)).